We begin with the raw amino-acid sequence, 121 residues long: Large ribosomal subunit protein uL24 (121 aa).

The protein belongs to the universal ribosomal protein uL24 family. As to quaternary structure, part of the 50S ribosomal subunit.

In terms of biological role, one of two assembly initiator proteins, it binds directly to the 5'-end of the 23S rRNA, where it nucleates assembly of the 50S subunit. Functionally, located at the polypeptide exit tunnel on the outside of the subunit. The protein is Large ribosomal subunit protein uL24 of Thermococcus kodakarensis (strain ATCC BAA-918 / JCM 12380 / KOD1) (Pyrococcus kodakaraensis (strain KOD1)).